Consider the following 207-residue polypeptide: Thymidine kinase (207 aa).

ATP-binding positions include 15–22 and 88–91; these read GSMFSGKS and DEVQ. Residue Glu89 is the Proton acceptor of the active site. Positions 145, 148, 183, and 186 each coordinate Zn(2+).

Belongs to the thymidine kinase family. In terms of assembly, homotetramer.

It localises to the cytoplasm. It carries out the reaction thymidine + ATP = dTMP + ADP + H(+). This is Thymidine kinase from Oceanobacillus iheyensis (strain DSM 14371 / CIP 107618 / JCM 11309 / KCTC 3954 / HTE831).